A 307-amino-acid chain; its full sequence is NmrA-like family domain-containing oxidoreductase flvB (307 aa).

Residues 4–9 (LITGAT), 32–36 (SSSSP), 53–54 (DY), 74–76 (STN), and 148–151 (YVEG) contribute to the NADP(+) site.

It belongs to the NmrA-type oxidoreductase family.

The enzyme catalyses (2S)-5,5-dimethyl-2,3,4,5-tetrahydropyridine-2,6-dicarboxylate + NADPH + 2 H(+) = (6S)-3,3-dimethylpiperidine-2,6-dicarboxylate + NADP(+). It carries out the reaction (2S)-5,5-dimethyl-2,3,4,5-tetrahydropyridine-2,6-dicarboxylate + NADH + 2 H(+) = (6S)-3,3-dimethylpiperidine-2,6-dicarboxylate + NAD(+). It functions in the pathway secondary metabolite biosynthesis; terpenoid biosynthesis. Its function is as follows. NmrA-like family domain-containing oxidoreductase; part of the gene cluster that mediates the biosynthesis of flavunoidine, an alkaloidal terpenoid with a tetracyclic cage-like core connected to dimethylcadaverine via a C-N bond and acylated with 5,5-dimethyl-L-pipecolate. The tetracyclic core is synthesized by the terpene cyclase flvE and the cytochrome P450 monooxygenase flvD. The terpene cyclase flvE catalyzes the cyclization of farnesyl pyrophosphate (FPP) to form (1R,4R,5S)-(+)-acoradiene and the cytochrome P450 monooxygenase flvD is then responsible for oxidative conversion of (1R,4R,5S)-(+)-acoradiene into the tetracyclic cage present in the final product flavunoidine. In parallel, the N-methyltransferase flvH dimethylates L-lysine to give N,N-dimethyl-L-Lysin which is decarboxylated by flvG to afford dimethylcadaverine. The terpene cyclase-like protein flvF is the enzyme that attaches the dimethylcadaverine precusor at the C-7 of the tetracyclic cage to yield pre-flavunoidine. The cytochrome monooxygenase flvC hydroxylates the C-10 position of pre-flavunoidine whereas the NRPS flvI acylates the terpenoid core at the hydroxylated C-10 with dimethylpipecolate to yield final flavunoidine. The bifunctional enzyme flvA and the dehydrogenase flvB are responsible for the synthesis of the dimethylpipecolate precursor. The PLP-dependent lyase domain of flvA might use L-O-acetyl-homoserine and alpha-keto-isovalerate to form an intermediary ketone that can cyclize intramolecularly to yield an imine. The imine can be reduced by flvB to yield the 6-carboxylated pipecolate. The C-terminal alpha-KG-dependent oxygenase domain of flvA is then proposed to catalyze the decarboxylation to yield dimethylpipecolate. The protein is NmrA-like family domain-containing oxidoreductase flvB of Aspergillus flavus (strain ATCC 200026 / FGSC A1120 / IAM 13836 / NRRL 3357 / JCM 12722 / SRRC 167).